Consider the following 489-residue polypeptide: Protein SIP5 (489 aa).

The interval M1–A84 is disordered. S13 is subject to Phosphoserine. Polar residues-rich tracts occupy residues S21–I32 and L51–L69. T183 and T433 each carry phosphothreonine. Residues S419 to P489 are disordered. S436 carries the phosphoserine modification. A Phosphothreonine modification is found at T438. A compositionally biased stretch (basic and acidic residues) spans Q461–R477.

Belongs to the SIP5 family. As to quaternary structure, interacts with NPA1, SNF1 and REG1.

It localises to the cytoplasm. Its function is as follows. May negatively regulate the SNF1 kinase by promoting the interaction of the REG1/GLC7 phosphatase complex with the kinase. Deletion of SIP5 promotes resistance to artemisinin, which is probably an indirect effect of an action on the electron transport chain. This chain is Protein SIP5 (SIP5), found in Saccharomyces cerevisiae (strain ATCC 204508 / S288c) (Baker's yeast).